A 448-amino-acid polypeptide reads, in one-letter code: Solute carrier family 52, riboflavin transporter, member 3-A (448 aa).

The next 3 membrane-spanning stretches (helical) occupy residues 11-31 (AFGLGSWVSINGLWVELPLIV), 40-60 (LPSYLTVIIQFANLGPLLVTL), and 73-93 (LAIYAVLSIGVVACILLAVFW). N-linked (GlcNAc...) asparagine glycosylation occurs at N94. 2 helical membrane-spanning segments follow: residues 107–127 (AFFILTFFLALVDCTSSVTFL) and 138–158 (ITTYFIGEGLSGLVPGLVALA). N-linked (GlcNAc...) asparagine glycans are attached at residues N168, N171, N175, and N194. Transmembrane regions (helical) follow at residues 198 to 218 (EIFFSFLAVMTTISLGAFLIL), 280 to 300 (AFIYVMVLWVNSATNGLLPSV), 315 to 335 (LSAALSAVANPVACIIAMFFP), 339 to 359 (LVFLGILCLLGSTFGGYNMAM), 376 to 396 (AIIVLSWVFFTGLLSYVKVMV), and 407 to 427 (ALVWCGAAVQTGSLLGSIIMF).

This sequence belongs to the riboflavin transporter family.

The protein resides in the cell membrane. It carries out the reaction riboflavin(in) = riboflavin(out). Its function is as follows. Plasma membrane transporter mediating the uptake by cells of the water soluble vitamin B2/riboflavin that plays a key role in biochemical oxidation-reduction reactions of the carbohydrate, lipid, and amino acid metabolism. The chain is Solute carrier family 52, riboflavin transporter, member 3-A (slc52a3a) from Danio rerio (Zebrafish).